Here is a 236-residue protein sequence, read N- to C-terminus: Ribose-5-phosphate isomerase A (236 aa).

Residues 33–36 (TGST), 90–93 (DGAD), and 103–106 (KGGG) each bind substrate. Glu-112 serves as the catalytic Proton acceptor. Lys-130 provides a ligand contact to substrate.

It belongs to the ribose 5-phosphate isomerase family. As to quaternary structure, homodimer.

It carries out the reaction aldehydo-D-ribose 5-phosphate = D-ribulose 5-phosphate. Its pathway is carbohydrate degradation; pentose phosphate pathway; D-ribose 5-phosphate from D-ribulose 5-phosphate (non-oxidative stage): step 1/1. Its function is as follows. Catalyzes the reversible conversion of ribose-5-phosphate to ribulose 5-phosphate. This is Ribose-5-phosphate isomerase A from Nostoc sp. (strain PCC 7120 / SAG 25.82 / UTEX 2576).